Consider the following 566-residue polypeptide: Proline--tRNA ligase (566 aa).

The protein belongs to the class-II aminoacyl-tRNA synthetase family. ProS type 1 subfamily. In terms of assembly, homodimer.

Its subcellular location is the cytoplasm. The catalysed reaction is tRNA(Pro) + L-proline + ATP = L-prolyl-tRNA(Pro) + AMP + diphosphate. Functionally, catalyzes the attachment of proline to tRNA(Pro) in a two-step reaction: proline is first activated by ATP to form Pro-AMP and then transferred to the acceptor end of tRNA(Pro). As ProRS can inadvertently accommodate and process non-cognate amino acids such as alanine and cysteine, to avoid such errors it has two additional distinct editing activities against alanine. One activity is designated as 'pretransfer' editing and involves the tRNA(Pro)-independent hydrolysis of activated Ala-AMP. The other activity is designated 'posttransfer' editing and involves deacylation of mischarged Ala-tRNA(Pro). The misacylated Cys-tRNA(Pro) is not edited by ProRS. The sequence is that of Proline--tRNA ligase from Campylobacter concisus (strain 13826).